The sequence spans 433 residues: Pyrimidine-nucleoside phosphorylase (433 aa).

Phosphate is bound at residue 81 to 83 (KHS). K(+)-binding residues include G88 and T90. Phosphate-binding positions include T92, 108 to 110 (KMS), and T120. R168 and K187 together coordinate substrate. Residues L243, A246, and E255 each coordinate K(+).

Belongs to the thymidine/pyrimidine-nucleoside phosphorylase family. As to quaternary structure, homodimer. Requires K(+) as cofactor.

The catalysed reaction is uridine + phosphate = alpha-D-ribose 1-phosphate + uracil. It catalyses the reaction thymidine + phosphate = 2-deoxy-alpha-D-ribose 1-phosphate + thymine. It carries out the reaction 2'-deoxyuridine + phosphate = 2-deoxy-alpha-D-ribose 1-phosphate + uracil. In terms of biological role, catalyzes phosphorolysis of the pyrimidine nucleosides uridine, thymidine and 2'-deoxyuridine with the formation of the corresponding pyrimidine base and ribose-1-phosphate. The protein is Pyrimidine-nucleoside phosphorylase (pdp) of Staphylococcus aureus (strain Mu50 / ATCC 700699).